Here is a 269-residue protein sequence, read N- to C-terminus: 4-hydroxy-tetrahydrodipicolinate reductase (269 aa).

11–16 (GPIGRM) contacts NAD(+). Lys-39 contacts NADP(+). Residues 101 to 103 (GTT) and 125 to 128 (ASNF) contribute to the NAD(+) site. His-158 functions as the Proton donor/acceptor in the catalytic mechanism. Residue His-159 participates in (S)-2,3,4,5-tetrahydrodipicolinate binding. Lys-162 functions as the Proton donor in the catalytic mechanism. 168–169 (GT) provides a ligand contact to (S)-2,3,4,5-tetrahydrodipicolinate.

Belongs to the DapB family. Homotetramer.

It localises to the cytoplasm. It carries out the reaction (S)-2,3,4,5-tetrahydrodipicolinate + NAD(+) + H2O = (2S,4S)-4-hydroxy-2,3,4,5-tetrahydrodipicolinate + NADH + H(+). The enzyme catalyses (S)-2,3,4,5-tetrahydrodipicolinate + NADP(+) + H2O = (2S,4S)-4-hydroxy-2,3,4,5-tetrahydrodipicolinate + NADPH + H(+). Its pathway is amino-acid biosynthesis; L-lysine biosynthesis via DAP pathway; (S)-tetrahydrodipicolinate from L-aspartate: step 4/4. Its function is as follows. Catalyzes the conversion of 4-hydroxy-tetrahydrodipicolinate (HTPA) to tetrahydrodipicolinate. In Buchnera aphidicola subsp. Acyrthosiphon pisum (strain APS) (Acyrthosiphon pisum symbiotic bacterium), this protein is 4-hydroxy-tetrahydrodipicolinate reductase.